Consider the following 384-residue polypeptide: MSRLQFQLQATDGAARRGQLSFPCGTVQTPAFMPVGTYGAVKGVLPGQLCDLGAEIILGNTFHLFLRPGLEVIADHGGLHGFMRWNGPILTDSGGFQVFSLAHRRKISEQGVTFAAPTDGAQVFLGPEESMKIQKVLNSDIVMIFDECTPYPATEDVARDSMELSLRWAQRSRDAHDALDNDAALFGIIQGGVHPDLRGRSLDGLQAIGFDGYGIGGLAVGESESERNVILEYLHPRVPADRPRYLMGVGRPEDLVESVARGVDMFDCVMPTRHARNGQYFTGFGTVKIRNACYARDVDPIEPGCGCPACVGGYTRAYLRHLDRCNEMLASMLGTLHNLWYYETLMANMRAAITAGTFFAFRRSFYLARGLDLPPLPEVAGCAG.

Residue aspartate 92 is the Proton acceptor of the active site. Substrate-binding positions include 92–96, aspartate 146, glutamine 190, and glycine 217; that span reads DSGGF. The segment at 248-254 is RNA binding; sequence GVGRPED. Aspartate 267 serves as the catalytic Nucleophile. Positions 272 to 276 are RNA binding; important for wobble base 34 recognition; it reads TRHAR. The Zn(2+) site is built by cysteine 305, cysteine 307, cysteine 310, and histidine 337.

The protein belongs to the queuine tRNA-ribosyltransferase family. Homodimer. Within each dimer, one monomer is responsible for RNA recognition and catalysis, while the other monomer binds to the replacement base PreQ1. Zn(2+) is required as a cofactor.

The enzyme catalyses 7-aminomethyl-7-carbaguanine + guanosine(34) in tRNA = 7-aminomethyl-7-carbaguanosine(34) in tRNA + guanine. Its pathway is tRNA modification; tRNA-queuosine biosynthesis. Functionally, catalyzes the base-exchange of a guanine (G) residue with the queuine precursor 7-aminomethyl-7-deazaguanine (PreQ1) at position 34 (anticodon wobble position) in tRNAs with GU(N) anticodons (tRNA-Asp, -Asn, -His and -Tyr). Catalysis occurs through a double-displacement mechanism. The nucleophile active site attacks the C1' of nucleotide 34 to detach the guanine base from the RNA, forming a covalent enzyme-RNA intermediate. The proton acceptor active site deprotonates the incoming PreQ1, allowing a nucleophilic attack on the C1' of the ribose to form the product. After dissociation, two additional enzymatic reactions on the tRNA convert PreQ1 to queuine (Q), resulting in the hypermodified nucleoside queuosine (7-(((4,5-cis-dihydroxy-2-cyclopenten-1-yl)amino)methyl)-7-deazaguanosine). In Xylella fastidiosa (strain 9a5c), this protein is Queuine tRNA-ribosyltransferase.